The following is a 952-amino-acid chain: DNA topoisomerase 1 (952 aa).

The 124-residue stretch at 12 to 135 folds into the Toprim domain; sequence RRLVIVESPA…VKRMVFHEIT (124 aa). Residues glutamate 18 and aspartate 104 each coordinate Mg(2+). Residues 150–602 form the Topo IA-type catalytic domain; the sequence is NQKLVDAQET…RFYFGEGDGT (453 aa). The interval 184–189 is interaction with DNA; sequence SAGRVQ. Tyrosine 334 serves as the catalytic O-(5'-phospho-DNA)-tyrosine intermediate. A disordered region spans residues 847-952; it reads RFGPYVTDGE…KATASKTSED (106 aa). A compositionally biased stretch (basic and acidic residues) spans 871 to 884; the sequence is TPERGYELLAEKRA. Positions 885–906 are enriched in basic residues; it reads KGPAKKTAKKAVKKTAAKKAPA. Low complexity-rich tracts occupy residues 907-930 and 937-952; these read KKAA…AAKS and AKTA…TSED.

Belongs to the type IA topoisomerase family. Monomer. It depends on Mg(2+) as a cofactor.

It catalyses the reaction ATP-independent breakage of single-stranded DNA, followed by passage and rejoining.. In terms of biological role, releases the supercoiling and torsional tension of DNA, which is introduced during the DNA replication and transcription, by transiently cleaving and rejoining one strand of the DNA duplex. Introduces a single-strand break via transesterification at a target site in duplex DNA. The scissile phosphodiester is attacked by the catalytic tyrosine of the enzyme, resulting in the formation of a DNA-(5'-phosphotyrosyl)-enzyme intermediate and the expulsion of a 3'-OH DNA strand. The free DNA strand then undergoes passage around the unbroken strand, thus removing DNA supercoils. Finally, in the religation step, the DNA 3'-OH attacks the covalent intermediate to expel the active-site tyrosine and restore the DNA phosphodiester backbone. Functionally, relaxes supercoiled plasmid in vitro; in the presence of sIHF (integration host factor) relaxation is decreased. This is DNA topoisomerase 1 from Streptomyces coelicolor (strain ATCC BAA-471 / A3(2) / M145).